Consider the following 798-residue polypeptide: Penicillin-binding protein 1A (798 aa).

At 1-9 the chain is on the cytoplasmic side; the sequence is MIKKIITTC. The helical; Signal-anchor for type II membrane protein transmembrane segment at 10–30 threads the bilayer; it reads MGLNNGLALFGVGLIAIAILV. The Periplasmic segment spans residues 31 to 798; that stretch reads TYPKLPSLDS…NNRQQLDSLF (768 aa). Residues 50-218 are transglycosylase; the sequence is LTIYSSDGQV…SAYNPIVNPE (169 aa). Glutamate 88 functions as the Proton donor; for transglycosylase activity in the catalytic mechanism. The transpeptidase stretch occupies residues 413–699; the sequence is TVVQEPLLQG…GTIAVPVWVE (287 aa). The Acyl-ester intermediate; for transpeptidase activity role is filled by serine 460. The tract at residues 734 to 798 is disordered; that stretch reads TSSDLALDNS…NNRQQLDSLF (65 aa). The span at 782 to 798 shows a compositional bias: polar residues; it reads LPSNTGNNNRQQLDSLF.

It in the N-terminal section; belongs to the glycosyltransferase 51 family. The protein in the C-terminal section; belongs to the transpeptidase family.

The protein resides in the cell inner membrane. The enzyme catalyses [GlcNAc-(1-&gt;4)-Mur2Ac(oyl-L-Ala-gamma-D-Glu-L-Lys-D-Ala-D-Ala)](n)-di-trans,octa-cis-undecaprenyl diphosphate + beta-D-GlcNAc-(1-&gt;4)-Mur2Ac(oyl-L-Ala-gamma-D-Glu-L-Lys-D-Ala-D-Ala)-di-trans,octa-cis-undecaprenyl diphosphate = [GlcNAc-(1-&gt;4)-Mur2Ac(oyl-L-Ala-gamma-D-Glu-L-Lys-D-Ala-D-Ala)](n+1)-di-trans,octa-cis-undecaprenyl diphosphate + di-trans,octa-cis-undecaprenyl diphosphate + H(+). The catalysed reaction is Preferential cleavage: (Ac)2-L-Lys-D-Ala-|-D-Ala. Also transpeptidation of peptidyl-alanyl moieties that are N-acyl substituents of D-alanine.. The protein operates within cell wall biogenesis; peptidoglycan biosynthesis. Functionally, cell wall formation. Synthesis of cross-linked peptidoglycan from the lipid intermediates. The enzyme has a penicillin-insensitive transglycosylase N-terminal domain (formation of linear glycan strands) and a penicillin-sensitive transpeptidase C-terminal domain (cross-linking of the peptide subunits). In Neisseria flavescens, this protein is Penicillin-binding protein 1A (mrcA).